The chain runs to 159 residues: NADH-quinone oxidoreductase subunit I (159 aa).

4Fe-4S ferredoxin-type domains are found at residues 51–80 and 90–119; these read RRYENGEERCIACKLCEAICPAQAIVIEAD and TRYDIDMTKCIYCGLCQEACPVDAIVEGPN. C60, C63, C66, C70, C99, C102, C105, and C109 together coordinate [4Fe-4S] cluster.

Belongs to the complex I 23 kDa subunit family. As to quaternary structure, NDH-1 is composed of 14 different subunits. Subunits NuoA, H, J, K, L, M, N constitute the membrane sector of the complex. It depends on [4Fe-4S] cluster as a cofactor.

Its subcellular location is the cell inner membrane. It catalyses the reaction a quinone + NADH + 5 H(+)(in) = a quinol + NAD(+) + 4 H(+)(out). NDH-1 shuttles electrons from NADH, via FMN and iron-sulfur (Fe-S) centers, to quinones in the respiratory chain. The immediate electron acceptor for the enzyme in this species is believed to be ubiquinone. Couples the redox reaction to proton translocation (for every two electrons transferred, four hydrogen ions are translocated across the cytoplasmic membrane), and thus conserves the redox energy in a proton gradient. This is NADH-quinone oxidoreductase subunit I from Rickettsia conorii (strain ATCC VR-613 / Malish 7).